The primary structure comprises 600 residues: UvrABC system protein C (600 aa).

The GIY-YIG domain occupies 15-100 (NSAGVYQYFN…IKQLHPKYNI (86 aa)). In terms of domain architecture, UVR spans 203–238 (SILIKNLEKQMLVLAQNENYEEAAKVRDQIVTIKDL).

The protein belongs to the UvrC family. As to quaternary structure, interacts with UvrB in an incision complex.

The protein resides in the cytoplasm. Functionally, the UvrABC repair system catalyzes the recognition and processing of DNA lesions. UvrC both incises the 5' and 3' sides of the lesion. The N-terminal half is responsible for the 3' incision and the C-terminal half is responsible for the 5' incision. The polypeptide is UvrABC system protein C (Campylobacter jejuni subsp. jejuni serotype O:6 (strain 81116 / NCTC 11828)).